A 488-amino-acid polypeptide reads, in one-letter code: GTPase Der (488 aa).

The 164-residue stretch at 3–166 (PVVALVGRPN…YALAPYAEAL (164 aa)) folds into the EngA-type G 1 domain. GTP-binding positions include 9-16 (GRPNVGKS), 56-60 (DTGGI), and 118-121 (NKVD). The interval 168–192 (LNRDGDDEEEKEEREYTEEEAEAEQ) is disordered. Acidic residues predominate over residues 172–190 (GDDEEEKEEREYTEEEAEA). The EngA-type G 2 domain maps to 200 to 373 (IKLAVIGKPN…SVQEAYESAT (174 aa)). Residues 206-213 (GKPNVGKS), 253-257 (DTAGV), and 318-321 (NKWD) each bind GTP. Positions 374–458 (RRVSTSMLTR…PIQVRFQDGD (85 aa)) constitute a KH-like domain.

It belongs to the TRAFAC class TrmE-Era-EngA-EngB-Septin-like GTPase superfamily. EngA (Der) GTPase family. In terms of assembly, associates with the 50S ribosomal subunit.

GTPase that plays an essential role in the late steps of ribosome biogenesis. The polypeptide is GTPase Der (Shewanella woodyi (strain ATCC 51908 / MS32)).